The sequence spans 442 residues: Limonoid 1-O-acetyltransferse (442 aa).

Residues His155 and Asp381 each act as proton acceptor in the active site.

Belongs to the plant acyltransferase family. Monomer.

The catalysed reaction is (1S)-1-hydroxy-luvungin A + acetyl-CoA = (1S)-1-acetoxy-luvungin A + CoA. It functions in the pathway secondary metabolite biosynthesis; terpenoid biosynthesis. Functionally, acetyltransferase involved in the biosynthesis of limonoids triterpene natural products such as limonin, a compound with insecticidal activity responsible for the bitter taste in citrus. Catalyzes the formation of (1S)-1-acetoxy-luvungin A from (1S)-1-hydroxy-luvungin A. This chain is Limonoid 1-O-acetyltransferse, found in Citrus sinensis (Sweet orange).